We begin with the raw amino-acid sequence, 69 residues long: Sec-independent protein translocase protein TatA (69 aa).

Residues 1 to 21 (MFGLGGQELVLILLIVLLLFG) form a helical membrane-spanning segment. The span at 47 to 63 (EEEFNKSMDDNPKKEKA) shows a compositional bias: basic and acidic residues. A disordered region spans residues 47–69 (EEEFNKSMDDNPKKEKATTASKS).

The protein belongs to the TatA/E family. Forms a complex with TatC.

It localises to the cell inner membrane. Functionally, part of the twin-arginine translocation (Tat) system that transports large folded proteins containing a characteristic twin-arginine motif in their signal peptide across membranes. TatA could form the protein-conducting channel of the Tat system. This Chlorobium chlorochromatii (strain CaD3) protein is Sec-independent protein translocase protein TatA.